Consider the following 527-residue polypeptide: EGF domain-specific O-linked N-acetylglucosamine transferase (527 aa).

The N-terminal stretch at 1 to 17 is a signal peptide; the sequence is MLMLFVFGVLLHEVSLS. The Required for optimal activity motif lies at 295 to 297; it reads DYD. Residue asparagine 354 is glycosylated (N-linked (GlcNAc...) asparagine). A Prevents secretion from ER motif is present at residues 524–527; that stretch reads HDEL.

The protein belongs to the glycosyltransferase 61 family.

The protein localises to the endoplasmic reticulum lumen. It carries out the reaction L-seryl-[protein] + UDP-N-acetyl-alpha-D-glucosamine = 3-O-(N-acetyl-beta-D-glucosaminyl)-L-seryl-[protein] + UDP + H(+). It catalyses the reaction L-threonyl-[protein] + UDP-N-acetyl-alpha-D-glucosamine = 3-O-(N-acetyl-beta-D-glucosaminyl)-L-threonyl-[protein] + UDP + H(+). Functionally, catalyzes the transfer of a single N-acetylglucosamine from UDP-GlcNAc to a serine or threonine residue in extracellular proteins resulting in their modification with a beta-linked N-acetylglucosamine (O-GlcNAc). Specifically glycosylates the Thr residue located between the fifth and sixth conserved cysteines of folded EGF-like domains. The sequence is that of EGF domain-specific O-linked N-acetylglucosamine transferase (EOGT) from Pan troglodytes (Chimpanzee).